We begin with the raw amino-acid sequence, 746 residues long: MRREFCWDAYSKAAGSRASSPLPRQDRDSFCHQMSFCLTELHLWSLKNTLHIADRDIGIYQYYDKKDPPATEHGNLEKKQKLAESRDYPWTLKNRRPEKLRDSLKELEELMQNSRCVLSKWKNKYVCQLLFGSGVLVSLSLSGPQLEKVVIDRSLVGKLISDTISDALLTDSFIILSFLAQNKLCFIQFTKKMESSDVNKRLEKLSALDYKIFYYEIPGPINKTTERHLAINCVHDRVVCWWPLVNDDAWPWAPISSEKDRANLLLLGYAQGRLEVLSSVRTEWDPLDVRFGTKQPYQVFTVEHSVSVDKEPMADSCIYECIRNKIQCVSVTRIPLKSKAISCCRNVTEDKLILGCEDSSLILYETHRRVTLLAQTELLPSLISCHPSGAILLVGSNQGELQIFDMALSPINIQLLAEDRLPRETLQFSKLFDASSSLVQMQWIAPQVVSQKGEGSDIYDLLFLRFERGPLGVLLFKLGVFTRGQLGLIDIIFQYIHCDEIYEAINILSSMNWDTLGHQCFISMSAIVNHLLRQKLTPEREAQLETSLGTFYAPTRPLLDSTILEYRDQISKYARRFFHHLLRYQRFEKAFLLAVDVGARDLFMDIHYLALDKGELALAEVARKRASDIDAESITSGVELLGPLDRGDMLNEAFIGLSLAPQGEDSFPDNLPPSCPTHRHILQQRILNGSSNRQIIDRRNELEKDICSGFLMTNTCNAEDGELREDGREQEIRDGGSLKMIHFGLV.

2 WD repeats span residues 326-374 (IQCV…TLLA) and 375-414 (QTEL…INIQ).

It belongs to the WD repeat fritz family. As to quaternary structure, component of the CPLANE (ciliogenesis and planar polarity effectors) complex, composed of INTU, FUZ and WDPCP. Interacts with CPLANE1.

It localises to the cell membrane. The protein localises to the cytoplasm. Its subcellular location is the cytoskeleton. The protein resides in the cilium axoneme. It is found in the cilium basal body. In terms of biological role, probable effector of the planar cell polarity signaling pathway which regulates the septin cytoskeleton in both ciliogenesis and collective cell movements. Together with FUZ and WDPCP proposed to function as core component of the CPLANE (ciliogenesis and planar polarity effectors) complex involved in the recruitment of peripheral IFT-A proteins to basal bodies. Binds phosphatidylinositol 3-phosphate with highest affinity, followed by phosphatidylinositol 4-phosphate and phosphatidylinositol 5-phosphate. This is WD repeat-containing and planar cell polarity effector protein fritz homolog (WDPCP) from Homo sapiens (Human).